A 396-amino-acid chain; its full sequence is Tryptophan synthase beta chain (396 aa).

K88 carries the N6-(pyridoxal phosphate)lysine modification.

It belongs to the TrpB family. Tetramer of two alpha and two beta chains. The cofactor is pyridoxal 5'-phosphate.

It catalyses the reaction (1S,2R)-1-C-(indol-3-yl)glycerol 3-phosphate + L-serine = D-glyceraldehyde 3-phosphate + L-tryptophan + H2O. The protein operates within amino-acid biosynthesis; L-tryptophan biosynthesis; L-tryptophan from chorismate: step 5/5. Functionally, the beta subunit is responsible for the synthesis of L-tryptophan from indole and L-serine. This is Tryptophan synthase beta chain from Shewanella sp. (strain MR-7).